The sequence spans 396 residues: S-adenosylmethionine synthase (396 aa).

His15 contacts ATP. Position 17 (Asp17) interacts with Mg(2+). K(+) is bound at residue Glu43. Residues Glu56 and Gln99 each contribute to the L-methionine site. The flexible loop stretch occupies residues 99–109 (QSSDIAQGVDR). ATP is bound by residues 175 to 177 (DGK), 241 to 242 (RF), Asp250, 256 to 257 (RK), Ser273, and Lys277. Residue Asp250 participates in L-methionine binding. Lys281 provides a ligand contact to L-methionine.

It belongs to the AdoMet synthase family. As to quaternary structure, homotetramer; dimer of dimers. Requires Mg(2+) as cofactor. K(+) serves as cofactor.

It localises to the cytoplasm. The catalysed reaction is L-methionine + ATP + H2O = S-adenosyl-L-methionine + phosphate + diphosphate. Its pathway is amino-acid biosynthesis; S-adenosyl-L-methionine biosynthesis; S-adenosyl-L-methionine from L-methionine: step 1/1. Catalyzes the formation of S-adenosylmethionine (AdoMet) from methionine and ATP. The overall synthetic reaction is composed of two sequential steps, AdoMet formation and the subsequent tripolyphosphate hydrolysis which occurs prior to release of AdoMet from the enzyme. The protein is S-adenosylmethionine synthase of Pelotomaculum thermopropionicum (strain DSM 13744 / JCM 10971 / SI).